The following is a 151-amino-acid chain: Viral interleukin-17 (151 aa).

An N-terminal signal peptide occupies residues 1 to 22 (MTFRKTSLVLLLLLSIDCIVKS). N-linked (GlcNAc...) asparagine; by host glycans are attached at residues N36, N53, and N64. 2 disulfides stabilise this stretch: C90-C140 and C95-C142.

The protein belongs to the IL-17 family.

It is found in the secreted. This Saimiri sciureus (Common squirrel monkey) protein is Viral interleukin-17 (13).